Here is a 617-residue protein sequence, read N- to C-terminus: AUGMIN subunit 3 (617 aa).

3 coiled-coil regions span residues 107-140 (DATLAHKAEALELQRQLRRLQTQYDLLTGQSSAL), 314-334 (LHSLRRKHADLVEEISTLYQK), and 481-504 (AIIQQIVALQSDLSSLQSDLENSL).

The protein belongs to the HAUS3 family. In terms of assembly, part of the augmin complex composed of 8 subunits. The complex acts on microtubules and interacts with gamma-tubulin in spindles and the phragmoplast. Interacts with AUG1.

The protein localises to the cytoplasm. Its subcellular location is the cytoskeleton. It is found in the spindle. The protein resides in the phragmoplast. Functionally, involved in microtubules reorganization during spindle and phragmoplast development. Required for gamma-tubulin localization during mitosis. This is AUGMIN subunit 3 from Arabidopsis thaliana (Mouse-ear cress).